We begin with the raw amino-acid sequence, 500 residues long: Lysine--tRNA ligase (500 aa).

The Mg(2+) site is built by E410 and E417.

This sequence belongs to the class-II aminoacyl-tRNA synthetase family. Homodimer. Mg(2+) is required as a cofactor.

It is found in the cytoplasm. It carries out the reaction tRNA(Lys) + L-lysine + ATP = L-lysyl-tRNA(Lys) + AMP + diphosphate. The protein is Lysine--tRNA ligase of Pseudomonas syringae pv. syringae (strain B728a).